The following is an 86-amino-acid chain: Co-chaperonin GroES (86 aa).

It belongs to the GroES chaperonin family. As to quaternary structure, heptamer of 7 subunits arranged in a ring. Interacts with the chaperonin GroEL.

It is found in the cytoplasm. Functionally, together with the chaperonin GroEL, plays an essential role in assisting protein folding. The GroEL-GroES system forms a nano-cage that allows encapsulation of the non-native substrate proteins and provides a physical environment optimized to promote and accelerate protein folding. GroES binds to the apical surface of the GroEL ring, thereby capping the opening of the GroEL channel. This is Co-chaperonin GroES from Sulfurovum sp. (strain NBC37-1).